Reading from the N-terminus, the 130-residue chain is Small ribosomal subunit protein uS17m (130 aa).

Belongs to the universal ribosomal protein uS17 family. Component of the mitochondrial ribosome small subunit (28S) which comprises a 12S rRNA and about 30 distinct proteins.

The protein resides in the mitochondrion. The sequence is that of Small ribosomal subunit protein uS17m (MRPS17) from Bos taurus (Bovine).